Here is a 104-residue protein sequence, read N- to C-terminus: NADH-quinone oxidoreductase subunit K (104 aa).

The next 3 helical transmembrane spans lie at 4–24 (VPASAYLTLAIILFCIGLFGA), 31–51 (VIVLVCIELMLNAANLNFVAF), and 67–87 (LFTMAVAAAEAAVGLAILIAL).

The protein belongs to the complex I subunit 4L family. NDH-1 is composed of 14 different subunits. Subunits NuoA, H, J, K, L, M, N constitute the membrane sector of the complex.

It localises to the cell membrane. It catalyses the reaction a quinone + NADH + 5 H(+)(in) = a quinol + NAD(+) + 4 H(+)(out). Functionally, NDH-1 shuttles electrons from NADH, via FMN and iron-sulfur (Fe-S) centers, to quinones in the respiratory chain. The immediate electron acceptor for the enzyme in this species is believed to be a menaquinone. Couples the redox reaction to proton translocation (for every two electrons transferred, four hydrogen ions are translocated across the cytoplasmic membrane), and thus conserves the redox energy in a proton gradient. The sequence is that of NADH-quinone oxidoreductase subunit K from Bacillus anthracis (strain A0248).